The following is a 478-amino-acid chain: UDP-N-acetylmuramate--L-alanine ligase (478 aa).

122 to 128 (GTHGKTT) serves as a coordination point for ATP.

It belongs to the MurCDEF family.

Its subcellular location is the cytoplasm. It carries out the reaction UDP-N-acetyl-alpha-D-muramate + L-alanine + ATP = UDP-N-acetyl-alpha-D-muramoyl-L-alanine + ADP + phosphate + H(+). It functions in the pathway cell wall biogenesis; peptidoglycan biosynthesis. Functionally, cell wall formation. The protein is UDP-N-acetylmuramate--L-alanine ligase of Stenotrophomonas maltophilia (strain K279a).